The primary structure comprises 363 residues: Peptide chain release factor 2 (363 aa).

Q251 is subject to N5-methylglutamine.

It belongs to the prokaryotic/mitochondrial release factor family. Post-translationally, methylated by PrmC. Methylation increases the termination efficiency of RF2.

It is found in the cytoplasm. In terms of biological role, peptide chain release factor 2 directs the termination of translation in response to the peptide chain termination codons UGA and UAA. The polypeptide is Peptide chain release factor 2 (Helicobacter pylori (strain G27)).